The chain runs to 473 residues: MRAGPGPTVTLALVLAVSWAMELKPTAPPIFTGRPFVVAWDVPTQDCGPRLKVPLDLNAFDVQASPNEGFVNQNITIFYRDRLGLYPRFDSAGRSVHGGVPQNVSLWAHRKMLQKRVEHYIRTQESAGLAVIDWEDWRPVWVRNWQDKDVYRRLSRQLVASRHPDWPPDRIVKQAQYEFEFAAQQFMLETLRYVKAVRPRHLWGFYLFPDCYNHDYVQNWESYTGRCPDVEVARNDQLAWLWAESTALFPSVYLDETLASSRHGRNFVSFRVQEALRVARTHHANHALPVYVFTRPTYSRRLTGLSEMDLISTIGESAALGAAGVILWGDAGYTTSTETCQYLKDYLTRLLVPYVVNVSWATQYCSRAQCHGHGRCVRRNPSASTFLHLSTNSFRLVPGHAPGEPQLRPVGELSWADIDHLQTHFRCQCYLGWSGEQCQWDHRQAAGGASEAWAGSHLTSLLALAALAFTWTL.

The signal sequence occupies residues Met-1–Ala-20. Cystine bridges form between Cys-47–Cys-340 and Cys-211–Cys-227. Residues Asn-74 and Asn-103 are each glycosylated (N-linked (GlcNAc...) asparagine). The active-site Proton donor is the Glu-135. A glycan (N-linked (GlcNAc...) asparagine) is linked at Asn-357. Positions Ala-361–Gln-439 constitute an EGF-like domain. Intrachain disulfides connect Cys-365/Cys-376, Cys-370/Cys-427, and Cys-429/Cys-438. Gly-448 carries the GPI-anchor amidated glycine lipid modification. A propeptide spans Ala-449–Leu-473 (removed in mature form).

This sequence belongs to the glycosyl hydrolase 56 family. In terms of assembly, interacts with MST1R. Widely expressed (at protein level).

The protein resides in the cell membrane. It carries out the reaction Random hydrolysis of (1-&gt;4)-linkages between N-acetyl-beta-D-glucosamine and D-glucuronate residues in hyaluronate.. Functionally, catalyzes hyaluronan degradation into small fragments that are endocytosed and degraded in lysosomes by HYAL1 and exoglycosidases. Essential for the breakdown of extracellular matrix hyaluronan. The chain is Hyaluronidase-2 (HYAL2) from Homo sapiens (Human).